Consider the following 371-residue polypeptide: Phospho-N-acetylmuramoyl-pentapeptide-transferase (371 aa).

Transmembrane regions (helical) follow at residues 25–45 (YLTF…VAMG), 79–99 (TMGG…FADL), 104–124 (VWVV…DDYA), 139–159 (KLIA…IFAP), 179–199 (LVIN…AGFS), 210–230 (GLAI…AYLV), 247–267 (VGEL…FLWY), 274–294 (IFMG…IAVC), 299–319 (LVLG…MIQV), and 348–368 (TVVI…LATL).

The protein belongs to the glycosyltransferase 4 family. MraY subfamily. The cofactor is Mg(2+).

It localises to the cell inner membrane. It carries out the reaction UDP-N-acetyl-alpha-D-muramoyl-L-alanyl-gamma-D-glutamyl-meso-2,6-diaminopimeloyl-D-alanyl-D-alanine + di-trans,octa-cis-undecaprenyl phosphate = di-trans,octa-cis-undecaprenyl diphospho-N-acetyl-alpha-D-muramoyl-L-alanyl-D-glutamyl-meso-2,6-diaminopimeloyl-D-alanyl-D-alanine + UMP. Its pathway is cell wall biogenesis; peptidoglycan biosynthesis. In terms of biological role, catalyzes the initial step of the lipid cycle reactions in the biosynthesis of the cell wall peptidoglycan: transfers peptidoglycan precursor phospho-MurNAc-pentapeptide from UDP-MurNAc-pentapeptide onto the lipid carrier undecaprenyl phosphate, yielding undecaprenyl-pyrophosphoryl-MurNAc-pentapeptide, known as lipid I. In Caulobacter sp. (strain K31), this protein is Phospho-N-acetylmuramoyl-pentapeptide-transferase.